The chain runs to 445 residues: Gamma-glutamyl phosphate reductase (445 aa).

The protein belongs to the gamma-glutamyl phosphate reductase family.

The protein localises to the cytoplasm. It catalyses the reaction L-glutamate 5-semialdehyde + phosphate + NADP(+) = L-glutamyl 5-phosphate + NADPH + H(+). It participates in amino-acid biosynthesis; L-proline biosynthesis; L-glutamate 5-semialdehyde from L-glutamate: step 2/2. In terms of biological role, catalyzes the NADPH-dependent reduction of L-glutamate 5-phosphate into L-glutamate 5-semialdehyde and phosphate. The product spontaneously undergoes cyclization to form 1-pyrroline-5-carboxylate. In Saccharopolyspora erythraea (strain ATCC 11635 / DSM 40517 / JCM 4748 / NBRC 13426 / NCIMB 8594 / NRRL 2338), this protein is Gamma-glutamyl phosphate reductase.